The following is a 339-amino-acid chain: Small ribosomal subunit biogenesis GTPase RsgA (339 aa).

In terms of domain architecture, CP-type G spans 111–271; that stretch reads MRGLLKPVAA…LIDSPGIREF (161 aa). GTP contacts are provided by residues 159–162 and 213–221; these read NKAD and GQSGVGKSS. Zn(2+)-binding residues include Cys295, Cys300, His302, and Cys308.

It belongs to the TRAFAC class YlqF/YawG GTPase family. RsgA subfamily. As to quaternary structure, monomer. Associates with 30S ribosomal subunit, binds 16S rRNA. It depends on Zn(2+) as a cofactor.

It localises to the cytoplasm. Its function is as follows. One of several proteins that assist in the late maturation steps of the functional core of the 30S ribosomal subunit. Helps release RbfA from mature subunits. May play a role in the assembly of ribosomal proteins into the subunit. Circularly permuted GTPase that catalyzes slow GTP hydrolysis, GTPase activity is stimulated by the 30S ribosomal subunit. The protein is Small ribosomal subunit biogenesis GTPase RsgA of Pseudomonas aeruginosa (strain UCBPP-PA14).